The primary structure comprises 262 residues: Taurine import ATP-binding protein TauB (262 aa).

The region spanning Leu-4–Ala-233 is the ABC transporter domain. An ATP-binding site is contributed by Gly-38–Thr-45.

This sequence belongs to the ABC transporter superfamily. Taurine importer (TC 3.A.1.17.1) family. As to quaternary structure, the complex is composed of two ATP-binding proteins (TauB), two transmembrane proteins (TauC) and a solute-binding protein (TauA).

The protein resides in the cell inner membrane. It catalyses the reaction taurine(out) + ATP + H2O = taurine(in) + ADP + phosphate + H(+). Its function is as follows. Part of the ABC transporter complex TauABC involved in taurine import. Responsible for energy coupling to the transport system. This Pseudomonas putida (strain ATCC 47054 / DSM 6125 / CFBP 8728 / NCIMB 11950 / KT2440) protein is Taurine import ATP-binding protein TauB.